We begin with the raw amino-acid sequence, 562 residues long: Formate--tetrahydrofolate ligase (562 aa).

77–84 contacts ATP; that stretch reads TPAGEGKS.

The protein belongs to the formate--tetrahydrofolate ligase family.

It catalyses the reaction (6S)-5,6,7,8-tetrahydrofolate + formate + ATP = (6R)-10-formyltetrahydrofolate + ADP + phosphate. The protein operates within one-carbon metabolism; tetrahydrofolate interconversion. In Corynebacterium jeikeium (strain K411), this protein is Formate--tetrahydrofolate ligase.